A 547-amino-acid chain; its full sequence is Glucose-6-phosphate isomerase (547 aa).

The active-site Proton donor is E351. Residues H382 and K510 contribute to the active site.

This sequence belongs to the GPI family.

The protein resides in the cytoplasm. It catalyses the reaction alpha-D-glucose 6-phosphate = beta-D-fructose 6-phosphate. Its pathway is carbohydrate biosynthesis; gluconeogenesis. The protein operates within carbohydrate degradation; glycolysis; D-glyceraldehyde 3-phosphate and glycerone phosphate from D-glucose: step 2/4. Catalyzes the reversible isomerization of glucose-6-phosphate to fructose-6-phosphate. The protein is Glucose-6-phosphate isomerase of Saccharophagus degradans (strain 2-40 / ATCC 43961 / DSM 17024).